A 769-amino-acid chain; its full sequence is TSC22 domain family protein 2 (769 aa).

4 disordered regions span residues Ala-20–Pro-86, His-224–Met-292, Ala-334–Pro-353, and Val-520–Gln-563. Over residues Glu-28–Asp-37 the composition is skewed to acidic residues. Positions Gly-229 to Ala-252 are enriched in polar residues. The segment covering Gly-269 to Leu-279 has biased composition (low complexity). The span at Ser-531 to Ser-541 shows a compositional bias: low complexity. The segment covering Val-542 to Gln-563 has biased composition (polar residues). Residues Met-691 to Leu-725 adopt a coiled-coil conformation. A compositionally biased stretch (polar residues) spans Ser-726 to Ser-745. A disordered region spans residues Ser-726–Ala-769. A compositionally biased stretch (pro residues) spans Pro-754–Gln-763.

Belongs to the TSC-22/Dip/Bun family. Interacts with NRBP1. Interacts with PKM isoform M2; the interaction results in reduced nuclear levels of PKM isoform M2, leading to repression of cyclin CCND1 transcription and reduced cell growth. Interacts with WDR77. As to expression, expressed in the cortex, medulla and papilla of the kidney. In terms of tissue distribution, expressed in the kidney.

Functionally, reduces the level of nuclear PKM isoform M2 which results in repression of cyclin CCND1 transcription and reduced cell growth. In terms of biological role, may protect kidney cells from hyperosmotic stress. This is TSC22 domain family protein 2 from Mus musculus (Mouse).